The primary structure comprises 109 residues: Nucleoid-associated protein Spea_1509 (109 aa).

The interval 87–109 (NQKEKMAEVTGGMQLPPGMKMPF) is disordered.

The protein belongs to the YbaB/EbfC family. Homodimer.

Its subcellular location is the cytoplasm. It localises to the nucleoid. Functionally, binds to DNA and alters its conformation. May be involved in regulation of gene expression, nucleoid organization and DNA protection. The chain is Nucleoid-associated protein Spea_1509 from Shewanella pealeana (strain ATCC 700345 / ANG-SQ1).